The primary structure comprises 222 residues: Deoxyribose-phosphate aldolase (222 aa).

The active-site Proton donor/acceptor is the Asp-91. Residue Lys-153 is the Schiff-base intermediate with acetaldehyde of the active site. Residue Lys-182 is the Proton donor/acceptor of the active site.

The protein belongs to the DeoC/FbaB aldolase family. DeoC type 1 subfamily.

It is found in the cytoplasm. It carries out the reaction 2-deoxy-D-ribose 5-phosphate = D-glyceraldehyde 3-phosphate + acetaldehyde. It participates in carbohydrate degradation; 2-deoxy-D-ribose 1-phosphate degradation; D-glyceraldehyde 3-phosphate and acetaldehyde from 2-deoxy-alpha-D-ribose 1-phosphate: step 2/2. Its function is as follows. Catalyzes a reversible aldol reaction between acetaldehyde and D-glyceraldehyde 3-phosphate to generate 2-deoxy-D-ribose 5-phosphate. In Mycoplasma capricolum subsp. capricolum (strain California kid / ATCC 27343 / NCTC 10154), this protein is Deoxyribose-phosphate aldolase.